The chain runs to 686 residues: Bromodomain-containing factor 1 (686 aa).

2 disordered regions span residues 1-69 and 85-150; these read MTDI…PAGL and NGYN…NPIP. Low complexity predominate over residues 9–25; the sequence is NDVDVNGNNVNDDVSSN. The span at 99–120 shows a compositional bias: basic and acidic residues; it reads QGLKKEEGGQGTKQEDLDENSK. Over residues 130 to 139 the composition is skewed to pro residues; that stretch reads EPAPAPPPEP. The 110-residue stretch at 145–254 folds into the Bromo 1 domain; that stretch reads PQNPIPKHQQ…ASFEKHMLNM (110 aa). S270 carries the post-translational modification Phosphoserine. Positions 283-304 are disordered; it reads QTHNGRPKRTIHPPKSKDIYPY. Residues 287 to 296 show a composition bias toward basic residues; sequence GRPKRTIHPP. The 110-residue stretch at 312–421 folds into the Bromo 2 domain; the sequence is KRLQQAMKFC…EVFNSKWADR (110 aa). 4 disordered regions span residues 424–447, 486–523, 594–636, and 649–686; these read LDDYDSDEDSRTQGDYDDYESEYS, IRKERRLARGSKKRGKRSKGRSGSKNASSKGRRDKKNK, SSGA…EQSR, and DSASPLSQNGSPGQIQSAAHNGFSSSSDDDVSSESEEE. A Phosphoserine modification is found at S429. Residues 438–447 are compositionally biased toward acidic residues; sequence DYDDYESEYS. Residues 460–499 are a coiled coil; the sequence is AIQYLEEQLARMKVELQQLKKQELEKIRKERRLARGSKKR. Residues 488–507 show a composition bias toward basic residues; sequence KERRLARGSKKRGKRSKGRS. The NET domain maps to 518–598; the sequence is RDKKNKLKTV…RQYESSSGAS (81 aa). Composition is skewed to polar residues over residues 594-620 and 652-671; these read SSGASNGLDGTSGVTRDASSLSPTSAG and SPLSQNGSPGQIQSAAHNGF. 2 positions are modified to phosphoserine: S615 and S659. A compositionally biased stretch (acidic residues) spans 675–686; sequence SDDDVSSESEEE.

It belongs to the BET family. As to quaternary structure, interacts with the TFIID subunit TAF7 and with acetylated histones H3 and H4. Post-translationally, phosphorylated by the casein kinase CK2 complex.

Its subcellular location is the nucleus. Transcription factor involved in the expression of a broad class of genes including snRNAs. Required for sporulation and DNA-damage repair. Prevents the spreading of SIR silencing at telomeres and protects histone H4, but not H3, from deacetylation. In Saccharomyces cerevisiae (strain ATCC 204508 / S288c) (Baker's yeast), this protein is Bromodomain-containing factor 1 (BDF1).